Here is a 479-residue protein sequence, read N- to C-terminus: UDP-N-acetylmuramate--L-alanine ligase (479 aa).

124–130 lines the ATP pocket; it reads GSHGKTT.

The protein belongs to the MurCDEF family.

Its subcellular location is the cytoplasm. It carries out the reaction UDP-N-acetyl-alpha-D-muramate + L-alanine + ATP = UDP-N-acetyl-alpha-D-muramoyl-L-alanine + ADP + phosphate + H(+). Its pathway is cell wall biogenesis; peptidoglycan biosynthesis. In terms of biological role, cell wall formation. The protein is UDP-N-acetylmuramate--L-alanine ligase of Synechococcus sp. (strain RCC307).